The chain runs to 344 residues: MGIDERKKQILRAIVLDYIATAEPVGSRTIARKYGLGISPATIRNEMADLEEMGYLEQPHTSAGRIPSQRGYRYYVDELMEPETPAEEEKLIIKTNYQAKVKSISEVIERTGQLMSQLTSYAALVSTPRVTGSTVQHVQLIAMGGGKAMVLVVTEPEKVHTRVIDLPENITAEDLETVSRVMNAKIRGHSLNDIRITILREIYLELLRHKAVVEYIMDLIEDSGESTEDRVYLGGILNILNQPEFRNVEKMKTLLSLLDQEALLSSLLAEQAGQEEGITVLIGDEFKCDLIQGCSLVSARYGVEGRAVGALAVLGPSRMDYARVTGLVEYLTRNLSRVLEKLYR.

Belongs to the HrcA family.

Functionally, negative regulator of class I heat shock genes (grpE-dnaK-dnaJ and groELS operons). Prevents heat-shock induction of these operons. The polypeptide is Heat-inducible transcription repressor HrcA (Desulforudis audaxviator (strain MP104C)).